The primary structure comprises 188 residues: Elongation factor P-like protein (188 aa).

Belongs to the elongation factor P family.

The sequence is that of Elongation factor P-like protein from Vibrio parahaemolyticus serotype O3:K6 (strain RIMD 2210633).